Here is a 291-residue protein sequence, read N- to C-terminus: MIRSYIRNIILAILSPLLTTPPPLILPPPYEKIIQEITTVLSINNYDDGSLAPIILRLAWHCCATYDMTTNTGGSNGATMRFVPEITDEGNYGLDIARAALEPIKQRYPAISYADLWTLAGKVAIEYMGGPTIIWKSGRVDYTNDRCTPSNGLLPFADKDANHIRKTFTRLGYNDQQTVALIGAHGVGRCHKRFSGWEGKWTRTPKTFSNQFYVVLLNETWSQGEVPETGKTQYFNADKSLIMLNTDMELIRDKSYLHWVEIYAKDEPKFFHDFSSAFAKLLELGIKRETL.

His-61 (proton acceptor) is an active-site residue. Residue His-185 coordinates heme b. Catalysis depends on Trp-201, which acts as the Tryptophan radical intermediate.

This sequence belongs to the peroxidase family. Cytochrome c peroxidase subfamily. The cofactor is heme b.

Destroys radicals which are normally produced within the cells and which are toxic to biological systems. This chain is Putative heme-binding peroxidase (CCP2), found in Candida albicans (strain SC5314 / ATCC MYA-2876) (Yeast).